A 341-amino-acid chain; its full sequence is Basic membrane protein B (341 aa).

A signal peptide spans 1 to 14 (MRIVIFILGILLTS). Residue C15 is the site of N-palmitoyl cysteine attachment. C15 carries the S-diacylglycerol cysteine lipid modification.

This sequence belongs to the BMP lipoprotein family. As to quaternary structure, monomer.

Its subcellular location is the cell inner membrane. Functionally, may be part of an ABC-type nucleoside uptake system involved in the purine salvage pathway. The chain is Basic membrane protein B (bmpB) from Borrelia garinii subsp. bavariensis (strain ATCC BAA-2496 / DSM 23469 / PBi) (Borreliella bavariensis).